The primary structure comprises 198 residues: Glycerol-3-phosphate acyltransferase (198 aa).

5 helical membrane passes run 4–24 (LALIMIIIAYLLGSISSAVLI), 53–75 (SAAGLVLLCDILKGMLPVWGGYF), 80–102 (PFMLGIIAISACLGHMYPLFFHF), 112–132 (LGALAPIGLDLTGMLFGCWVV), and 134–154 (VLVTGYSSLASMITALLAPLF).

Belongs to the PlsY family. As to quaternary structure, probably interacts with PlsX.

The protein localises to the cell inner membrane. It catalyses the reaction an acyl phosphate + sn-glycerol 3-phosphate = a 1-acyl-sn-glycero-3-phosphate + phosphate. Its pathway is lipid metabolism; phospholipid metabolism. Its function is as follows. Catalyzes the transfer of an acyl group from acyl-phosphate (acyl-PO(4)) to glycerol-3-phosphate (G3P) to form lysophosphatidic acid (LPA). This enzyme utilizes acyl-phosphate as fatty acyl donor, but not acyl-CoA or acyl-ACP. The protein is Glycerol-3-phosphate acyltransferase of Aliivibrio fischeri (strain ATCC 700601 / ES114) (Vibrio fischeri).